The chain runs to 518 residues: Golgi-associated olfactory signaling regulator (518 aa).

Positions 1-19 (MKSFSRILFLVFLLAGLRS) are cleaved as a signal peptide. Residues 20 to 409 (KAAPSAPLPL…GRPRGAAGGA (390 aa)) lie on the Extracellular side of the membrane. Residues 38–377 (HPSETSPLKG…ATLRAPQRHS (340 aa)) form a disordered region. A compositionally biased stretch (basic and acidic residues) spans 92–106 (DLRETPHPESPETPK). An N-linked (GlcNAc...) asparagine glycan is attached at N124. Residues 138-153 (TPGPTEMPHPGSPETP) are compositionally biased toward pro residues. A glycan (N-linked (GlcNAc...) asparagine) is linked at N156. Composition is skewed to polar residues over residues 168-180 (TPNT…TPQE) and 187-207 (LNAT…NPTK). N-linked (GlcNAc...) asparagine glycans are attached at residues N188 and N220. Basic and acidic residues-rich tracts occupy residues 209 to 220 (PDPKSPEKHDLN) and 236 to 247 (DPSKTPHPESHV). Composition is skewed to polar residues over residues 248–270 (THNP…QNAT) and 276–285 (SDPQISTSLY). N268 carries an N-linked (GlcNAc...) asparagine glycan. The chain crosses the membrane as a helical span at residues 410-430 (LCLFFAGTALLIGIFVLLWCL). Topologically, residues 431–518 (YRRAARQRPF…SPATLPNNFV (88 aa)) are cytoplasmic. The tract at residues 477–518 (HIATKQPPPTPPLPPKLPPPPRGGRPQRLEALSPATLPNNFV) is disordered. Residues 482–499 (QPPPTPPLPPKLPPPPRG) are compositionally biased toward pro residues.

It is found in the golgi apparatus membrane. Required for proper function of the olfactory system. May be involved in establishing the acuity of olfactory sensory signaling. The protein is Golgi-associated olfactory signaling regulator (GFY) of Homo sapiens (Human).